The following is a 1355-amino-acid chain: Collagen alpha-2(I) chain (1355 aa).

A signal peptide spans Met-1–Cys-22. Gln-23 is modified (pyrrolidone carboxylic acid). The propeptide at Gln-23–Ala-71 is N-terminal propeptide. A compositionally biased stretch (basic and acidic residues) spans Arg-26–Pro-35. Positions Arg-26–Asp-1111 are disordered. Gln-72 bears the Pyrrolidone carboxylic acid mark. At Lys-77 the chain carries Allysine. Positions Pro-99–Pro-108 are enriched in low complexity. Positions Ala-132–Glu-146 are enriched in basic and acidic residues. Lys-168 is modified (5-hydroxylysine; alternate). O-linked (Gal...) hydroxylysine; alternate glycosylation is present at Lys-168. Positions Pro-218–Thr-267 are enriched in low complexity. The span at Pro-276 to Asn-290 shows a compositional bias: pro residues. The span at Pro-291–Ala-303 shows a compositional bias: low complexity. The segment covering Gly-304 to Gly-322 has biased composition (gly residues). Positions Ala-327–Ala-336 are enriched in low complexity. Composition is skewed to gly residues over residues Gly-340–Gly-349 and Gly-403–Gly-412. Composition is skewed to low complexity over residues Ser-413–Asn-426 and Glu-465–Pro-495. 2 stretches are compositionally biased toward gly residues: residues Gly-523 to Gly-532 and Gly-586 to Gly-595. The segment covering Pro-596–Ala-618 has biased composition (low complexity). Gly residues predominate over residues Gly-619–Gly-628. Composition is skewed to low complexity over residues Asn-659–Pro-675, Ser-687–Ala-701, and Ala-708–Thr-726. A compositionally biased stretch (basic and acidic residues) spans Ala-728–Lys-738. Composition is skewed to low complexity over residues Ala-741–Ala-767 and Ala-776–Ala-788. The span at Pro-804 to Arg-813 shows a compositional bias: basic and acidic residues. Positions Ala-852–Thr-869 are enriched in low complexity. Residues Gly-874–Gly-883 show a composition bias toward gly residues. 2 stretches are compositionally biased toward low complexity: residues Glu-884–Ser-912 and Pro-947–Ser-966. Gly residues predominate over residues Gly-967–Gly-976. Residues Arg-996–Lys-1014 are compositionally biased toward basic and acidic residues. A compositionally biased stretch (low complexity) spans Leu-1019–Val-1041. Positions Ala-1080–His-1091 are enriched in pro residues. A compositionally biased stretch (gly residues) spans Gly-1093–Gly-1105. A propeptide spans Asp-1111–Lys-1355 (C-terminal propeptide). One can recognise a Fibrillar collagen NC1 domain in the interval Tyr-1120 to Lys-1355. Intrachain disulfides connect Cys-1150–Cys-1182, Cys-1190–Cys-1353, and Cys-1261–Cys-1306. The Ca(2+) site is built by Asp-1168, Asn-1170, Gln-1171, Cys-1173, and Asp-1176. N-linked (GlcNAc...) asparagine glycans are attached at residues Asn-1206 and Asn-1256.

Belongs to the fibrillar collagen family. As to quaternary structure, trimers of one alpha 2(I) and two alpha 1(I) chains. Post-translationally, prolines at the third position of the tripeptide repeating unit (G-X-Y) are hydroxylated in some or all of the chains. Forms the fibrils of tendon, ligaments and bones. In bones the fibrils are mineralized with calcium hydroxyapatite.

It is found in the secreted. The protein resides in the extracellular space. Its subcellular location is the extracellular matrix. Type I collagen is a member of group I collagen (fibrillar forming collagen). In Aquarana catesbeiana (American bullfrog), this protein is Collagen alpha-2(I) chain (COL1A2).